Reading from the N-terminus, the 284-residue chain is Homeobox-leucine zipper protein HAT4 (284 aa).

The segment covering 48–59 (ESFTSSVPNSDS) has biased composition (polar residues). Positions 48 to 132 (ESFTSSVPNS…DGDNSRKKLR (85 aa)) are disordered. Residues 89–100 (VSSPNSTVSSST) show a composition bias toward low complexity. Residues 126–185 (NSRKKLRLSKDQSAILEETFKDHSTLNPKQKQALAKQLGLRARQVEVWFQNRRARTKLKQ) constitute a DNA-binding region (homeobox). The segment at 193-214 (LRRCCENLTEENRRLQKEVTEL) is leucine-zipper.

Belongs to the HD-ZIP homeobox family. Class II subfamily. As to quaternary structure, interacts with DNA as homodimer. As to expression, predominantly expressed in leaves and stems.

The protein resides in the nucleus. In terms of biological role, probable transcription factor involved in the negative regulation of cell elongation and specific cell proliferation processes such as lateral root formation and secondary growth of the vascular system. Acts as a mediator of the red/far-red light effects on leaf cell expansion in the shading response. Binds to the DNA sequence 5'-CAAT[GC]ATTG-3'. Negatively regulates its own expression. The sequence is that of Homeobox-leucine zipper protein HAT4 (HAT4) from Arabidopsis thaliana (Mouse-ear cress).